A 48-amino-acid polypeptide reads, in one-letter code: Delta-actitoxin-Bcg1b (48 aa).

3 disulfide bridges follow: Cys-4–Cys-45, Cys-6–Cys-35, and Cys-28–Cys-46.

It belongs to the sea anemone sodium channel inhibitory toxin family. Type I subfamily.

Its subcellular location is the secreted. The protein localises to the nematocyst. Its function is as follows. Binds to the sodium channels Nav1.1/SCN1A (EC(50)=165 nM), Nav1.5/SCN5A (EC(50)=103 nM) and Nav1.6/SCN8A (EC(50)=133 nM), thereby delaying their inactivation. Also inhibits Nav1.2/SCN2A, Nav1.3/SCN3A, and Nav1.4/SCN4A, but to a lesser extent. Inhibits Nav1.5 differently from isoforms Nav1.1 and Nav1.6. In Nav1.5 the effect consists in a right-shift of inactivation; whereas in both Nav1.1 and Nav1.6 the effect consists in an incomplete inactivation. In Bunodosoma cangicum (Sea anemone), this protein is Delta-actitoxin-Bcg1b.